Here is a 215-residue protein sequence, read N- to C-terminus: N-(5'-phosphoribosyl)anthranilate isomerase (215 aa).

It belongs to the TrpF family.

The enzyme catalyses N-(5-phospho-beta-D-ribosyl)anthranilate = 1-(2-carboxyphenylamino)-1-deoxy-D-ribulose 5-phosphate. The protein operates within amino-acid biosynthesis; L-tryptophan biosynthesis; L-tryptophan from chorismate: step 3/5. This chain is N-(5'-phosphoribosyl)anthranilate isomerase, found in Pelodictyon phaeoclathratiforme (strain DSM 5477 / BU-1).